An 83-amino-acid chain; its full sequence is Molybdopterin synthase sulfur carrier subunit (83 aa).

The protein belongs to the MoaD family.

It functions in the pathway cofactor biosynthesis; molybdopterin biosynthesis. Functionally, involved in sulfur transfer in the conversion of molybdopterin precursor Z to molybdopterin. Probably plays a role in host phagosome maturation arrest. This chain is Molybdopterin synthase sulfur carrier subunit (moaD1), found in Mycobacterium tuberculosis (strain ATCC 25618 / H37Rv).